The sequence spans 231 residues: Large ribosomal subunit protein uL1 (231 aa).

This sequence belongs to the universal ribosomal protein uL1 family. In terms of assembly, part of the 50S ribosomal subunit.

In terms of biological role, binds directly to 23S rRNA. The L1 stalk is quite mobile in the ribosome, and is involved in E site tRNA release. Its function is as follows. Protein L1 is also a translational repressor protein, it controls the translation of the L11 operon by binding to its mRNA. The protein is Large ribosomal subunit protein uL1 of Hydrogenovibrio crunogenus (strain DSM 25203 / XCL-2) (Thiomicrospira crunogena).